The primary structure comprises 353 residues: Photosystem II protein D1 (353 aa).

Position 2 is an N-acetylthreonine (T2). T2 bears the Phosphothreonine mark. Helical transmembrane passes span 29-46 (YIGWFGVLMIPTLLTATS), 118-133 (HFLLGVACYMGREWEL), and 142-156 (WIAVAYSAPVAAAAA). H118 contacts chlorophyll a. Pheophytin a is bound at residue Y126. [CaMn4O5] cluster contacts are provided by D170 and E189. A helical membrane pass occupies residues 197–218 (FHMLGVAGVFGGSLFSAMHGSL). H198 lines the chlorophyll a pocket. A quinone contacts are provided by residues H215 and 264–265 (SF). Position 215 (H215) interacts with Fe cation. Fe cation is bound at residue H272. Residues 274–288 (FLAAWPVVGIWFTAL) traverse the membrane as a helical segment. H332, E333, D342, and A344 together coordinate [CaMn4O5] cluster. The propeptide occupies 345–353 (SVDAPSING).

It belongs to the reaction center PufL/M/PsbA/D family. As to quaternary structure, PSII is composed of 1 copy each of membrane proteins PsbA, PsbB, PsbC, PsbD, PsbE, PsbF, PsbH, PsbI, PsbJ, PsbK, PsbL, PsbM, PsbT, PsbX, PsbY, PsbZ, Psb30/Ycf12, at least 3 peripheral proteins of the oxygen-evolving complex and a large number of cofactors. It forms dimeric complexes. It depends on The D1/D2 heterodimer binds P680, chlorophylls that are the primary electron donor of PSII, and subsequent electron acceptors. It shares a non-heme iron and each subunit binds pheophytin, quinone, additional chlorophylls, carotenoids and lipids. D1 provides most of the ligands for the Mn4-Ca-O5 cluster of the oxygen-evolving complex (OEC). There is also a Cl(-1) ion associated with D1 and D2, which is required for oxygen evolution. The PSII complex binds additional chlorophylls, carotenoids and specific lipids. as a cofactor. Post-translationally, tyr-161 forms a radical intermediate that is referred to as redox-active TyrZ, YZ or Y-Z. In terms of processing, C-terminally processed by CTPA; processing is essential to allow assembly of the oxygen-evolving complex and thus photosynthetic growth.

The protein resides in the plastid. It is found in the chloroplast thylakoid membrane. It catalyses the reaction 2 a plastoquinone + 4 hnu + 2 H2O = 2 a plastoquinol + O2. Functionally, photosystem II (PSII) is a light-driven water:plastoquinone oxidoreductase that uses light energy to abstract electrons from H(2)O, generating O(2) and a proton gradient subsequently used for ATP formation. It consists of a core antenna complex that captures photons, and an electron transfer chain that converts photonic excitation into a charge separation. The D1/D2 (PsbA/PsbD) reaction center heterodimer binds P680, the primary electron donor of PSII as well as several subsequent electron acceptors. The sequence is that of Photosystem II protein D1 from Adiantum capillus-veneris (Maidenhair fern).